The sequence spans 218 residues: Peptide deformylase 1 (218 aa).

Fe cation is bound by residues Cys126 and His168. Glu169 is an active-site residue. Residue His172 coordinates Fe cation.

It belongs to the polypeptide deformylase family. It depends on Fe(2+) as a cofactor.

It carries out the reaction N-terminal N-formyl-L-methionyl-[peptide] + H2O = N-terminal L-methionyl-[peptide] + formate. Removes the formyl group from the N-terminal Met of newly synthesized proteins. Requires at least a dipeptide for an efficient rate of reaction. N-terminal L-methionine is a prerequisite for activity but the enzyme has broad specificity at other positions. In Streptomyces coelicolor (strain ATCC BAA-471 / A3(2) / M145), this protein is Peptide deformylase 1.